Here is a 79-residue protein sequence, read N- to C-terminus: Conotoxin Cl9.4 (79 aa).

An N-terminal signal peptide occupies residues 1-23 (MNCYLILTVALLLTSAMTGTTTA). The propeptide occupies 24-37 (GQLNKKGVTLREDD). 3 disulfide bridges follow: C41-C58, C46-C68, and C48-C73.

As to expression, expressed by the venom duct.

It is found in the secreted. This is Conotoxin Cl9.4 from Californiconus californicus (California cone).